A 271-amino-acid chain; its full sequence is Mannosyl-3-phosphoglycerate phosphatase (271 aa).

Residue Asp-13 is the Nucleophile of the active site. 3 residues coordinate Mg(2+): Asp-13, Asp-15, and Asp-214.

Belongs to the HAD-like hydrolase superfamily. MPGP family. The cofactor is Mg(2+).

It is found in the cytoplasm. It catalyses the reaction 2-O-(alpha-D-mannosyl)-3-phosphoglycerate + H2O = (2R)-2-O-(alpha-D-mannosyl)-glycerate + phosphate. The sequence is that of Mannosyl-3-phosphoglycerate phosphatase from Escherichia coli O127:H6 (strain E2348/69 / EPEC).